A 370-amino-acid chain; its full sequence is tRNA-specific 2-thiouridylase MnmA (370 aa).

ATP is bound by residues Gly-12–Ser-19 and Leu-38. Residue Cys-105 is the Nucleophile of the active site. A disulfide bridge links Cys-105 with Cys-204. Gly-129 serves as a coordination point for ATP. Residues Lys-153–Gln-155 form an interaction with tRNA region. Residue Cys-204 is the Cysteine persulfide intermediate of the active site. An interaction with tRNA region spans residues Arg-310–Tyr-311.

This sequence belongs to the MnmA/TRMU family.

It localises to the cytoplasm. It catalyses the reaction S-sulfanyl-L-cysteinyl-[protein] + uridine(34) in tRNA + AH2 + ATP = 2-thiouridine(34) in tRNA + L-cysteinyl-[protein] + A + AMP + diphosphate + H(+). Catalyzes the 2-thiolation of uridine at the wobble position (U34) of tRNA, leading to the formation of s(2)U34. This chain is tRNA-specific 2-thiouridylase MnmA, found in Desulfitobacterium hafniense (strain Y51).